Consider the following 534-residue polypeptide: Inorganic phosphate transporter 1-6 (534 aa).

At 1-29 the chain is on the cytoplasmic side; it reads MGGGGGEQQQLEVLHALDVAKTQWYHFTA. A helical membrane pass occupies residues 30-50; it reads IVVAGMGFFTDAYDLFCISLV. At 51–75 the chain is on the extracellular side; the sequence is TKLLGRIYYRVDGSPSPGTLPPHVS. Residues 76-96 form a helical membrane-spanning segment; the sequence is ASVNGVAFVGTLSGQLFFGWL. Over 97–104 the chain is Cytoplasmic; the sequence is GDKLGRKR. The helical transmembrane segment at 105 to 125 threads the bilayer; sequence VYGITLMLMVLCSLASALSFG. The Extracellular portion of the chain corresponds to 126–127; the sequence is HT. The chain crosses the membrane as a helical span at residues 128–148; the sequence is PTSVMATLCFFRFWLGFGIGG. At 149–168 the chain is on the cytoplasmic side; it reads DYPLSATIMSEYANKKTRGA. Residues 169–189 form a helical membrane-spanning segment; the sequence is FIAAVFAMQGFGIITGGLVAI. Residues 190–216 lie on the Extracellular side of the membrane; the sequence is LVSASFRAAFPAPPYGEDPVASTPPQA. The chain crosses the membrane as a helical span at residues 217–237; that stretch reads DFVWRIILMLGALPAALTYYW. Topologically, residues 238–294 are cytoplasmic; the sequence is RTKMPETARYTALVANNAKQAAADMSKVLQVVEMRNIGNNGGSRRPFGLFSGEFVRR. Residues 295 to 315 traverse the membrane as a helical segment; sequence HGLHLVGTSATWLLLDIAFYS. Residues 316 to 350 are Extracellular-facing; the sequence is QNLFQKDIFSAVGWIPKAATMSALEELFRIARAQT. A helical membrane pass occupies residues 351 to 371; it reads LIALCGTVPGYWFTVALIDVV. At 372 to 375 the chain is on the cytoplasmic side; the sequence is GRFK. A helical transmembrane segment spans residues 376 to 396; sequence IQAVGFFMMTLFMLTLALPYH. At 397–405 the chain is on the extracellular side; that stretch reads HWTAPGKNH. A helical transmembrane segment spans residues 406 to 426; it reads VGFLLLYGLTFFFANFGPNST. The Cytoplasmic portion of the chain corresponds to 427–445; that stretch reads TFIVPAEIFPARLRATCHG. The chain crosses the membrane as a helical span at residues 446-466; it reads ISAASGKLGAIVGSFGFLYLA. Residues 467–486 are Extracellular-facing; the sequence is QSPDRSKTEHGYPPGIGVRN. The chain crosses the membrane as a helical span at residues 487 to 507; sequence SLFLLAACNLLGLLFTFLVPE. At 508–534 the chain is on the cytoplasmic side; it reads SKGKSLEEMSGDAEAQEEAPPPLQTVL. The interval 514 to 534 is disordered; sequence EEMSGDAEAQEEAPPPLQTVL.

It belongs to the major facilitator superfamily. Phosphate:H(+) symporter (TC 2.A.1.9) family. In terms of tissue distribution, highly expressed in leaves and at low levels in roots. Expressed in leaf xylem parenchyma cells.

It localises to the membrane. In terms of biological role, high-affinity transporter for external inorganic phosphate (Pi). Probably involved in Pi uptake, translocation and internal transport throughout the plant. The polypeptide is Inorganic phosphate transporter 1-6 (PHT1-6) (Oryza sativa subsp. japonica (Rice)).